The chain runs to 245 residues: MALIEGVGDEVTVLFSVLACLLVLALAWVSTHTTESTDPLPQSSGTTTPAQPSEAMTAIDSIREEAPGAESPSLRHRGPSAQPEPEAGVTASTPPDSPQEPLLLRLKFLNDSEQVARAWPQDTIGSLKRTQFPGREQQVRLIYQGQLLGDDTQTLGSLHLPPNCVLHCHVSTRVGPPHPPCPPGSEPGPSGLEIGSLLLPLLLLLLLLLWYCQIQYRPFFPLTATLGLAGFTLLLSLLAFAMYRP.

Residues 2-30 (ALIEGVGDEVTVLFSVLACLLVLALAWVS) are required to release iHOPS from membranes. Residues 11–31 (VTVLFSVLACLLVLALAWVST) traverse the membrane as a helical segment. A compositionally biased stretch (polar residues) spans 34-51 (TESTDPLPQSSGTTTPAQ). Residues 34 to 100 (TESTDPLPQS…ASTPPDSPQE (67 aa)) are disordered. Phosphoserine occurs at positions 73, 97, and 126. A Ubiquitin-like domain is found at 102-175 (LLLRLKFLND…LHCHVSTRVG (74 aa)). The next 2 helical transmembrane spans lie at 194–214 (IGSL…YCQI) and 219–239 (FFPL…SLLA).

Interacts with EEF1A1, GRIA2, GRIP1. Interacts with CAMLG, TUBG1. Interacts with NPM1 and CDKN2A; TMUB1 can enhance interaction between NPM1 and CDKN2A and is proposed to bridge the proteins; proposed to be mediated by iHOPS. Interacts with ERLIN2 and AMFR; TMUB1 promotes the interaction of ERLIN2 with AMFR. In terms of processing, processed by regulated intramembrane proteolysis (RIP) in the N-terminus to release iHOPS from membranes.

Its subcellular location is the membrane. The protein localises to the postsynaptic cell membrane. It localises to the recycling endosome. The protein resides in the cytoplasm. It is found in the cytoskeleton. Its subcellular location is the microtubule organizing center. The protein localises to the centrosome. It localises to the nucleus. The protein resides in the nucleolus. In terms of biological role, involved in sterol-regulated ubiquitination and degradation of HMG-CoA reductase HMGCR. Involved in positive regulation of AMPA-selective glutamate receptor GRIA2 recycling to the cell surface. Acts as a negative regulator of hepatocyte growth during regeneration. May contribute to the regulation of translation during cell-cycle progression. May contribute to the regulation of cell proliferation. May be involved in centrosome assembly. Modulates stabilization and nucleolar localization of tumor suppressor CDKN2A and enhances association between CDKN2A and NPM1. This is Transmembrane and ubiquitin-like domain-containing protein 1 (Tmub1) from Rattus norvegicus (Rat).